The primary structure comprises 80 residues: Protein FAM229B (80 aa).

Positions 1 to 44 (MPFRFGTQPRRFPVEGGDSSIGLEPGLSSSATCNGKEMSPTRQL) are disordered.

Belongs to the FAM229 family.

The protein is Protein FAM229B (FAM229B) of Bos taurus (Bovine).